A 341-amino-acid polypeptide reads, in one-letter code: Glycerol-3-phosphate dehydrogenase [NAD(P)+] (341 aa).

Positions 14, 15, 35, and 108 each coordinate NADPH. The sn-glycerol 3-phosphate site is built by Lys-108 and Gly-136. Ala-140 provides a ligand contact to NADPH. Sn-glycerol 3-phosphate-binding residues include Lys-191, Asp-244, Ser-254, Arg-255, and Asn-256. Lys-191 serves as the catalytic Proton acceptor. Position 255 (Arg-255) interacts with NADPH. Residues Val-279 and Glu-281 each coordinate NADPH.

This sequence belongs to the NAD-dependent glycerol-3-phosphate dehydrogenase family.

The protein localises to the cytoplasm. The enzyme catalyses sn-glycerol 3-phosphate + NAD(+) = dihydroxyacetone phosphate + NADH + H(+). It carries out the reaction sn-glycerol 3-phosphate + NADP(+) = dihydroxyacetone phosphate + NADPH + H(+). It functions in the pathway membrane lipid metabolism; glycerophospholipid metabolism. Catalyzes the reduction of the glycolytic intermediate dihydroxyacetone phosphate (DHAP) to sn-glycerol 3-phosphate (G3P), the key precursor for phospholipid synthesis. In Pseudomonas syringae pv. tomato (strain ATCC BAA-871 / DC3000), this protein is Glycerol-3-phosphate dehydrogenase [NAD(P)+].